A 405-amino-acid chain; its full sequence is L-rhamnonate dehydratase (405 aa).

2 residues coordinate substrate: His-33 and Arg-59. Mg(2+) is bound by residues Asp-226, Glu-252, and Glu-280. His-329 serves as the catalytic Proton acceptor. Glu-349 contacts substrate.

The protein belongs to the mandelate racemase/muconate lactonizing enzyme family. RhamD subfamily. In terms of assembly, homooctamer; tetramer of dimers. It depends on Mg(2+) as a cofactor.

The catalysed reaction is L-rhamnonate = 2-dehydro-3-deoxy-L-rhamnonate + H2O. In terms of biological role, catalyzes the dehydration of L-rhamnonate to 2-keto-3-deoxy-L-rhamnonate (KDR). The chain is L-rhamnonate dehydratase from Escherichia coli (strain K12 / DH10B).